A 105-amino-acid chain; its full sequence is Large ribosomal subunit protein uL24 (105 aa).

Belongs to the universal ribosomal protein uL24 family. As to quaternary structure, part of the 50S ribosomal subunit.

One of two assembly initiator proteins, it binds directly to the 5'-end of the 23S rRNA, where it nucleates assembly of the 50S subunit. In terms of biological role, one of the proteins that surrounds the polypeptide exit tunnel on the outside of the subunit. The sequence is that of Large ribosomal subunit protein uL24 from Wolbachia pipientis wMel.